The primary structure comprises 1330 residues: ESX-3 secretion system protein EccC3 (1330 aa).

2 helical membrane passes run 43–63 and 65–85; these read LPYLIGILIVGMIVALVATGM and VISPQTLFFPFVLLLAATALY. FtsK domains follow at residues 456-662, 811-1000, and 1090-1280; these read GEPL…SVSR, RDPL…RDSN, and LAPV…ADSG. Residues 479–486, 829–836, and 1107–1114 each bind ATP; these read GMTGSGKS, GGPKSGKS, and GDARSGKT.

As to quaternary structure, part of the ESX-3 / type VII secretion system (T7SS), which is composed of cytosolic and membrane components. The ESX-3 membrane complex is composed of EccB3, EccC3, EccD3 and EccE3.

Its subcellular location is the cell inner membrane. Functionally, part of the ESX-3 specialized secretion system, which is important for iron and zinc uptake or homeostasis. This Mycobacterium tuberculosis (strain ATCC 25618 / H37Rv) protein is ESX-3 secretion system protein EccC3.